A 304-amino-acid chain; its full sequence is Cell surface-binding protein OPG105 (304 aa).

In terms of domain architecture, Alpha-carbonic anhydrase spans 1-235 (MPQQLSPINI…NDDTQVYYSG (235 aa)). At 1-275 (MPQQLSPINI…YQKYIEGNKT (275 aa)) the chain is on the virion surface side. Residues 276 to 294 (FAIIAIVFVFILTAILFFM) traverse the membrane as a helical segment. The Intravirion portion of the chain corresponds to 295-304 (SQRYSREKQN).

This sequence belongs to the alpha-carbonic anhydrase family. As to quaternary structure, homodimer; disulfide-linked. Apparently non-glycosylated.

Its subcellular location is the virion membrane. Its function is as follows. Binds to chondroitin sulfate on the cell surface to provide virion attachment to target cell. This is Cell surface-binding protein OPG105 (OPG105) from Vaccinia virus (strain Ankara) (VACV).